We begin with the raw amino-acid sequence, 204 residues long: Recombination protein RecR (204 aa).

The C4-type zinc-finger motif lies at 58-75 (CSICQNVTDRDADPCRIC). Residues 83–181 (SVICVVESPV…MVTKIARGIP (99 aa)) enclose the Toprim domain.

This sequence belongs to the RecR family.

Its function is as follows. May play a role in DNA repair. It seems to be involved in an RecBC-independent recombinational process of DNA repair. It may act with RecF and RecO. This is Recombination protein RecR from Chlorobium phaeovibrioides (strain DSM 265 / 1930) (Prosthecochloris vibrioformis (strain DSM 265)).